Consider the following 433-residue polypeptide: Mblk-1-related factor 1 (433 aa).

The HTH psq-type 1 domain maps to 145–197 (NKSNILRRNYTVEDLTQAVEDIRQGKLGTRRASVVYGIPRSTLRNKIYKLEAE). The H-T-H motif DNA-binding region spans 173–193 (TRRASVVYGIPRSTLRNKIYK). Positions 235-254 (GNQSDSSSSSPHASMCPSSP) are enriched in low complexity. Disordered regions lie at residues 235–278 (GNQS…SCSP) and 304–338 (ANIS…PKRG). Positions 304-319 (ANISNVDTHTPTPISE) are enriched in polar residues. Over residues 320–332 (KSQKMHGNEEWKR) the composition is skewed to basic and acidic residues. The HTH psq-type 2 domain occupies 334-386 (RPKRGQYRKYDKNALDEAVRSVRRGEMTVHRAGSFFGVPHSTLEYKVKERNLM). The segment at residues 362 to 382 (VHRAGSFFGVPHSTLEYKVKE) is a DNA-binding region (H-T-H motif). The segment at 393-433 (LYSHDSSTSEDGSQLVTSTISEKSDSSSHTSTPIPFPISLV) is disordered. Over residues 396 to 408 (HDSSTSEDGSQLV) the composition is skewed to polar residues. Residues 409–424 (TSTISEKSDSSSHTST) show a composition bias toward low complexity.

As to expression, expressed in AIM, RIC, AIZ, ADF, ADL, ASK, AWA, AUA, AIN, RIH (or RIR) and RIF head neurons and, in PVP, PVQ and DVA (or DVC) tail neurons, some intestinal cells, somatic gonad and vulva.

It localises to the nucleus. Functionally, may act as transcription activator. Plays a role in neurogenesis by regulating neurite pruning between left and right AIM neurons and left and right RIF neurons during larval development. Regulates olfactory plasticity. In Caenorhabditis elegans, this protein is Mblk-1-related factor 1.